Here is a 90-residue protein sequence, read N- to C-terminus: RNA-binding protein Hfq (90 aa).

The region spanning 9–68 (EPFLNTLRKEKVPVSIYLVNGIKLQGQIESFDQFVVLLRNNVNQMVYKHAISTIVPARRV) is the Sm domain.

Belongs to the Hfq family. In terms of assembly, homohexamer.

In terms of biological role, RNA chaperone that binds small regulatory RNA (sRNAs) and mRNAs to facilitate mRNA translational regulation in response to envelope stress, environmental stress and changes in metabolite concentrations. Also binds with high specificity to tRNAs. The sequence is that of RNA-binding protein Hfq from Halorhodospira halophila (strain DSM 244 / SL1) (Ectothiorhodospira halophila (strain DSM 244 / SL1)).